The sequence spans 155 residues: Conopressin/neurophysin (155 aa).

Residues 1 to 26 (MMSSLCGMPLTYLLTAAVLSLSLTDA) form the signal peptide. A disulfide bridge connects residues Cys-27 and Cys-32. Gly-35 carries the glycine amide modification. 7 disulfides stabilise this stretch: Cys-50–Cys-94, Cys-53–Cys-67, Cys-61–Cys-84, Cys-68–Cys-74, Cys-101–Cys-115, Cys-109–Cys-127, and Cys-116–Cys-121. The N-linked (GlcNAc...) asparagine glycan is linked to Asn-88.

The protein belongs to the vasopressin/oxytocin family. In terms of processing, seven disulfide bonds are present in neurophysin.

The protein resides in the secreted. The sequence is that of Conopressin/neurophysin from Lymnaea stagnalis (Great pond snail).